The sequence spans 313 residues: Small ribosomal subunit protein uS2 (313 aa).

The span at 228-256 shows a compositional bias: basic and acidic residues; the sequence is RQEDKAAEAQDKDAQDTEDNKGARPRGAE. A disordered region spans residues 228–313; the sequence is RQEDKAAEAQ…VSKAGDKPKK (86 aa).

This sequence belongs to the universal ribosomal protein uS2 family.

This is Small ribosomal subunit protein uS2 from Amoebophilus asiaticus (strain 5a2).